Consider the following 262-residue polypeptide: MPVTLSTLKALRQKGEKIAVLTCYDASFARVFDAAGVDVLLVGDSLGMVIQGHASTLPVKLAEMAYHTRCVAAGTTRAFIVADLPFGSYQPSPERAYTAAARLMAAGAHMIKLEGGAVMVDTVAFLAARGIPVCAHLGLLPQSVNQLGGYRVQGREDGDAAQLVADARALEAAGAGLIVLEMVPAALAKTVTAALSMPTIGIGAGADCAGQVLVSYDMLGLYPRAPKFSKNFLAGAGSVDAAVRAYVAAVKDGSFPAAEHAF.

Mg(2+)-binding residues include Asp-44 and Asp-83. 3-methyl-2-oxobutanoate contacts are provided by residues 44–45 (DS), Asp-83, and Lys-112. Mg(2+) is bound at residue Glu-114. Glu-181 acts as the Proton acceptor in catalysis.

The protein belongs to the PanB family. Homodecamer; pentamer of dimers. Mg(2+) is required as a cofactor.

It is found in the cytoplasm. It catalyses the reaction 3-methyl-2-oxobutanoate + (6R)-5,10-methylene-5,6,7,8-tetrahydrofolate + H2O = 2-dehydropantoate + (6S)-5,6,7,8-tetrahydrofolate. Its pathway is cofactor biosynthesis; (R)-pantothenate biosynthesis; (R)-pantoate from 3-methyl-2-oxobutanoate: step 1/2. Functionally, catalyzes the reversible reaction in which hydroxymethyl group from 5,10-methylenetetrahydrofolate is transferred onto alpha-ketoisovalerate to form ketopantoate. The chain is 3-methyl-2-oxobutanoate hydroxymethyltransferase from Thiobacillus denitrificans (strain ATCC 25259 / T1).